The primary structure comprises 304 residues: Homoserine O-acetyltransferase (304 aa).

C142 (acyl-thioester intermediate) is an active-site residue. Substrate is bound by residues K163 and S192. H235 (proton acceptor) is an active-site residue. The active site involves E237. R249 serves as a coordination point for substrate.

The protein belongs to the MetA family.

The protein localises to the cytoplasm. It catalyses the reaction L-homoserine + acetyl-CoA = O-acetyl-L-homoserine + CoA. It participates in amino-acid biosynthesis; L-methionine biosynthesis via de novo pathway; O-acetyl-L-homoserine from L-homoserine: step 1/1. In terms of biological role, transfers an acetyl group from acetyl-CoA to L-homoserine, forming acetyl-L-homoserine. The protein is Homoserine O-acetyltransferase of Clostridium beijerinckii (strain ATCC 51743 / NCIMB 8052) (Clostridium acetobutylicum).